Reading from the N-terminus, the 272-residue chain is 3-methyl-2-oxobutanoate hydroxymethyltransferase (272 aa).

Residues Asp-43 and Asp-82 each coordinate Mg(2+). Residues 43–44, Asp-82, and Lys-112 each bind 3-methyl-2-oxobutanoate; that span reads DS. Glu-114 is a binding site for Mg(2+). The Proton acceptor role is filled by Glu-179.

This sequence belongs to the PanB family. In terms of assembly, homodecamer; pentamer of dimers. The cofactor is Mg(2+).

It localises to the cytoplasm. The catalysed reaction is 3-methyl-2-oxobutanoate + (6R)-5,10-methylene-5,6,7,8-tetrahydrofolate + H2O = 2-dehydropantoate + (6S)-5,6,7,8-tetrahydrofolate. Its pathway is cofactor biosynthesis; (R)-pantothenate biosynthesis; (R)-pantoate from 3-methyl-2-oxobutanoate: step 1/2. In terms of biological role, catalyzes the reversible reaction in which hydroxymethyl group from 5,10-methylenetetrahydrofolate is transferred onto alpha-ketoisovalerate to form ketopantoate. The chain is 3-methyl-2-oxobutanoate hydroxymethyltransferase from Staphylococcus aureus (strain COL).